The following is a 204-amino-acid chain: MTTFLQRDDFAVTARVLGALFYYSPESHETAPLVQALLNDDWQAQWPLDAEALAPVAAMFKTHSEESLPQAWQRLFIGPYALPSPPWGSVWLDRESVLFGDSTLALRQWMRENGIQFEMQQNEPEDHFGSLLLLAAWLAENDRHHECEQLLAWHLFPWSSRFLDVFIDHAGHPFYQALGQLARLTLAQWQAQLIIPVAVKPLFR.

This sequence belongs to the TorD/DmsD family. DmsD subfamily. Monomer in solution.

Functionally, required for biogenesis/assembly of DMSO reductase, but not for the interaction of the DmsA signal peptide with the Tat system. May be part of a chaperone cascade complex that facilitates a folding-maturation pathway for the substrate protein. In Salmonella typhimurium (strain LT2 / SGSC1412 / ATCC 700720), this protein is Tat proofreading chaperone DmsD.